A 171-amino-acid polypeptide reads, in one-letter code: Adenine phosphoribosyltransferase (171 aa).

It belongs to the purine/pyrimidine phosphoribosyltransferase family. As to quaternary structure, homodimer.

Its subcellular location is the cytoplasm. The enzyme catalyses AMP + diphosphate = 5-phospho-alpha-D-ribose 1-diphosphate + adenine. It participates in purine metabolism; AMP biosynthesis via salvage pathway; AMP from adenine: step 1/1. Its function is as follows. Catalyzes a salvage reaction resulting in the formation of AMP, that is energically less costly than de novo synthesis. The chain is Adenine phosphoribosyltransferase from Halalkalibacterium halodurans (strain ATCC BAA-125 / DSM 18197 / FERM 7344 / JCM 9153 / C-125) (Bacillus halodurans).